The chain runs to 252 residues: 2-succinyl-6-hydroxy-2,4-cyclohexadiene-1-carboxylate synthase (252 aa).

This sequence belongs to the AB hydrolase superfamily. MenH family. In terms of assembly, monomer.

The enzyme catalyses 5-enolpyruvoyl-6-hydroxy-2-succinyl-cyclohex-3-ene-1-carboxylate = (1R,6R)-6-hydroxy-2-succinyl-cyclohexa-2,4-diene-1-carboxylate + pyruvate. Its pathway is quinol/quinone metabolism; 1,4-dihydroxy-2-naphthoate biosynthesis; 1,4-dihydroxy-2-naphthoate from chorismate: step 3/7. It functions in the pathway quinol/quinone metabolism; menaquinone biosynthesis. Its function is as follows. Catalyzes a proton abstraction reaction that results in 2,5-elimination of pyruvate from 2-succinyl-5-enolpyruvyl-6-hydroxy-3-cyclohexene-1-carboxylate (SEPHCHC) and the formation of 2-succinyl-6-hydroxy-2,4-cyclohexadiene-1-carboxylate (SHCHC). This Escherichia coli (strain K12 / MC4100 / BW2952) protein is 2-succinyl-6-hydroxy-2,4-cyclohexadiene-1-carboxylate synthase.